Consider the following 363-residue polypeptide: RNFANDATFDIKKCDVHRLEEGPPTTAVLTREEGLKYYKIMQTVRRMELKADQLYKQKIIRGFCHLYDGQEACCMGLEAGINPTDHVITAYRAHGFTYTRGLPVREILAELTGRRGGCAKGKGGSMHMYAKNFYGGNGIVGAQVPLGVGIALACKYNEKDEICLTLYGDGAANQGQIFEAYNMAALWKLPCIFICENNRYGMGTSVERAAASTDYYKRGDFIPGIMVDGMDVLCVREATKFAAAYCRSGKGPMLMELQTYRYHGHSMSDPGVSYRTREEIQEVRSKSDPIMLLKDRMVNNNLASIEELKEIDVEVRKEIEDAAQFATADPEPPLEELGYHIYSRDPPFEVRGANQWIKYKSVS.

Residues 1-2 (RN) constitute a mitochondrion transit peptide. K36 is modified (N6-acetyllysine; alternate). An N6-succinyllysine; alternate modification is found at K36. Residues H65, Y91, R92, A130, G138, V140, D169, G170, A171, N198, and Y200 each coordinate pyruvate. 2 residues coordinate thiamine diphosphate: Y91 and R92. Thiamine diphosphate contacts are provided by G138, V140, D169, G170, A171, and N198. Residue D169 coordinates Mg(2+). The Mg(2+) site is built by N198 and Y200. Phosphoserine; by PDK1 is present on S205. Residue K217 is modified to N6-acetyllysine; alternate. Residue K217 is modified to N6-succinyllysine; alternate. K240 carries the post-translational modification N6-acetyllysine. K250 is modified (N6-succinyllysine). Residue H265 participates in thiamine diphosphate binding. S266 is subject to Phosphoserine; by PDK1, PDK2, PDK3 and PDK4. Position 268 is a phosphoserine (S268). At S273 the chain carries Phosphoserine; by PDK1, PDK2, PDK3 and PDK4. Y274 is subject to Phosphotyrosine. An N6-acetyllysine; alternate modification is found at K286. K286 bears the N6-succinyllysine; alternate mark. An N6-acetyllysine mark is found at K294 and K309. An N6-succinyllysine modification is found at K358.

Heterotetramer of two PDHA1 and two PDHB subunits. The heterotetramer interacts with DLAT, and is part of the multimeric pyruvate dehydrogenase complex that contains multiple copies of pyruvate dehydrogenase (E1), dihydrolipoamide acetyltransferase (DLAT, E2) and lipoamide dehydrogenase (DLD, E3). These subunits are bound to an inner core composed of about 48 DLAT and 12 PDHX molecules. The cofactor is thiamine diphosphate. It depends on Mg(2+) as a cofactor. Phosphorylation at Ser-205, Ser-266 and Ser-273 by PDK family kinases inactivates the enzyme; for this phosphorylation at a single site is sufficient. Phosphorylation at Ser-266 interferes with access to active site, and thereby inactivates the enzyme. Dephosphorylation at all three sites, i.e. at Ser-205, Ser-266 and Ser-273, is required for reactivation. In terms of processing, acetylation alters the phosphorylation pattern. Deacetylated by SIRT3.

It localises to the mitochondrion matrix. It catalyses the reaction N(6)-[(R)-lipoyl]-L-lysyl-[protein] + pyruvate + H(+) = N(6)-[(R)-S(8)-acetyldihydrolipoyl]-L-lysyl-[protein] + CO2. Pyruvate dehydrogenase activity is inhibited by phosphorylation of PDHA1; it is reactivated by dephosphorylation. The pyruvate dehydrogenase complex catalyzes the overall conversion of pyruvate to acetyl-CoA and CO(2), and thereby links the glycolytic pathway to the tricarboxylic cycle. The chain is Pyruvate dehydrogenase E1 component subunit alpha, mitochondrial (PDHA) from Sminthopsis macroura (Stripe-faced dunnart).